The following is a 51-amino-acid chain: Large ribosomal subunit protein bL33 (51 aa).

Residues 1-20 (MRDKIRLNSSAGTGHFYTTD) are disordered.

This sequence belongs to the bacterial ribosomal protein bL33 family.

This Psychromonas ingrahamii (strain DSM 17664 / CCUG 51855 / 37) protein is Large ribosomal subunit protein bL33.